We begin with the raw amino-acid sequence, 286 residues long: 4-diphosphocytidyl-2-C-methyl-D-erythritol kinase (286 aa).

Lysine 11 is an active-site residue. Position 94-104 (94-104 (PMGGGIGGGSS)) interacts with ATP. The active site involves aspartate 136.

It belongs to the GHMP kinase family. IspE subfamily.

It catalyses the reaction 4-CDP-2-C-methyl-D-erythritol + ATP = 4-CDP-2-C-methyl-D-erythritol 2-phosphate + ADP + H(+). Its pathway is isoprenoid biosynthesis; isopentenyl diphosphate biosynthesis via DXP pathway; isopentenyl diphosphate from 1-deoxy-D-xylulose 5-phosphate: step 3/6. In terms of biological role, catalyzes the phosphorylation of the position 2 hydroxy group of 4-diphosphocytidyl-2C-methyl-D-erythritol. In Pseudomonas entomophila (strain L48), this protein is 4-diphosphocytidyl-2-C-methyl-D-erythritol kinase.